Consider the following 83-residue polypeptide: Cytochrome b559 subunit alpha (83 aa).

The chain crosses the membrane as a helical span at residues 21–35 (IIHSITIPSLFIAGW). Residue H23 coordinates heme.

Heterodimer of an alpha subunit and a beta subunit. PSII is composed of 1 copy each of membrane proteins PsbA, PsbB, PsbC, PsbD, PsbE, PsbF, PsbH, PsbI, PsbJ, PsbK, PsbL, PsbM, PsbT, PsbX, PsbY, PsbZ, Psb30/Ycf12, at least 3 peripheral proteins of the oxygen-evolving complex and a large number of cofactors. It forms dimeric complexes. The cofactor is heme b.

Its subcellular location is the plastid. It is found in the chloroplast thylakoid membrane. Its function is as follows. This b-type cytochrome is tightly associated with the reaction center of photosystem II (PSII). PSII is a light-driven water:plastoquinone oxidoreductase that uses light energy to abstract electrons from H(2)O, generating O(2) and a proton gradient subsequently used for ATP formation. It consists of a core antenna complex that captures photons, and an electron transfer chain that converts photonic excitation into a charge separation. In Pisum sativum (Garden pea), this protein is Cytochrome b559 subunit alpha.